The sequence spans 638 residues: Cell division control protein 45 homolog (638 aa).

Positions 151–204 are disordered; that stretch reads ELSDEENSDSSNEREEEVEDDNRSVESYSSSDYQARSRRRFSEETTQRRAEIKE. Residues 153–170 show a composition bias toward acidic residues; sequence SDEENSDSSNEREEEVED. Residues 190–204 show a composition bias toward basic and acidic residues; sequence RFSEETTQRRAEIKE.

The protein belongs to the CDC45 family. As to quaternary structure, interacts with sld3.

The protein localises to the nucleus. In terms of biological role, required for initiation of chromosomal DNA replication. May have a role in regulating the MCM proteins nda1 and nda4. This Schizosaccharomyces pombe (strain 972 / ATCC 24843) (Fission yeast) protein is Cell division control protein 45 homolog (sna41).